We begin with the raw amino-acid sequence, 119 residues long: uncharacterized protein (119 aa).

This is an uncharacterized protein from Vaccinia virus (strain Copenhagen) (VACV).